Reading from the N-terminus, the 162-residue chain is Cytochrome B pre-mRNA-processing protein 6 (162 aa).

The residue at position 2 (Ser-2) is an N-acetylserine. At Thr-97 the chain carries Phosphothreonine.

It is found in the mitochondrion. Functionally, this protein is involved in processing of the 5' terminus and the intervening sequences of cytochrome b pre-mRNA. This chain is Cytochrome B pre-mRNA-processing protein 6 (CBP6), found in Saccharomyces cerevisiae (strain ATCC 204508 / S288c) (Baker's yeast).